A 308-amino-acid chain; its full sequence is Glycosyltransferase 6 domain-containing protein 1 (308 aa).

The Cytoplasmic segment spans residues 1-6 (MNSKRM). Residues 7–23 (LLLVLFAFSLMLVERYF) traverse the membrane as a helical; Signal-anchor for type II membrane protein segment. Topologically, residues 24–308 (RNHQVEELRL…KVAHDSHRKL (285 aa)) are lumenal. N-linked (GlcNAc...) asparagine glycosylation occurs at Asn-74. Substrate contacts are provided by residues 82 to 87 (FATGRF), 173 to 175 (AVN), and 195 to 198 (HAWW). Residue Glu-263 is the Nucleophile of the active site.

Belongs to the glycosyltransferase 6 family. The cofactor is Mn(2+).

The protein localises to the membrane. The chain is Glycosyltransferase 6 domain-containing protein 1 (GLT6D1) from Macaca fascicularis (Crab-eating macaque).